Consider the following 500-residue polypeptide: MANKKIRVRYAPSPTGHLHIGNARTALFNYLFARHNKGTLVLRIEDADTERNVEGGAESQIENLHWLGIDWDEGPDIGGDYGPYKQSERKDIYQKYIDQLLEEGKAYYSFKTEEELEAQREEQRAMGIAPHYVYEYEGMTTDEIKQAQAEARAKGLKPVVRIHIPEGVTYEWDDIVKGHLSFESDTIGGDFVIQKRDGMPTYNFAVVIDDHLMEISHVLRGDDHISNTPKQLCVYEALGWEAPVFGHMTLIINSATGKKLSKRDESVLQFIEQYRELVSCQKPCSTSSSLLGWSPVGESEIFSKREFIKQFDPARLSKSPAAFDQKKLDWVNNQYMKTADRDELLDLALHNLQEAGLVEANPAPGKMEWVRQLVNMYANQMSYTKQIVDLSKIFFTEAKYLTDEEVEEIKKDEARPAIEEFKKQLDKLDNFTAKKIMGAIMATRRETGIKGRKLFMPIRIATTRSMVGPGIGEAMELMGKDTVMKHLDLTLKQLSEAGIE.

A 'HIGH' region motif is present at residues 12-22 (PSPTGHLHIGN). A 'KMSKS' region motif is present at residues 259 to 263 (KLSKR). Residue Lys262 coordinates ATP.

Belongs to the class-I aminoacyl-tRNA synthetase family. Glutamate--tRNA ligase type 1 subfamily. As to quaternary structure, monomer.

The protein localises to the cytoplasm. The enzyme catalyses tRNA(Glu) + L-glutamate + ATP = L-glutamyl-tRNA(Glu) + AMP + diphosphate. In terms of biological role, catalyzes the attachment of glutamate to tRNA(Glu) in a two-step reaction: glutamate is first activated by ATP to form Glu-AMP and then transferred to the acceptor end of tRNA(Glu). The protein is Glutamate--tRNA ligase of Lactobacillus delbrueckii subsp. bulgaricus.